The following is a 291-amino-acid chain: MTENRYELNKNLAQMLKGGVIMDVQNPEQARIAEAAGAAAVMALERIPADIRAAGGVSRMSDPKMIKEIQEAVSIPVMAKVRIGHFVEAQILEAIEIDYIDESEVLSPADDRFHVDKKEFQVPFVCGAKDLGEALRRIAEGASMIRTKGEPGTGDIVQAVRHMRMMNQEIRRIQNLREDELYVAAKDLQVPVELVQYVHEHGKLPVVNFAAGGVATPADAALMMQLGAEGVFVGSGIFKSGDPVKRASAIVKAVTNFRNPQILAQISEDLGEAMVGINENEIQILMAERGK.

Asp23 is a D-ribose 5-phosphate binding site. The Schiff-base intermediate with D-ribose 5-phosphate role is filled by Lys80. Gly152 contacts D-ribose 5-phosphate. Arg164 provides a ligand contact to D-glyceraldehyde 3-phosphate. Residues Gly213 and 234 to 235 (GS) each bind D-ribose 5-phosphate.

It belongs to the PdxS/SNZ family. In the presence of PdxT, forms a dodecamer of heterodimers.

It catalyses the reaction aldehydo-D-ribose 5-phosphate + D-glyceraldehyde 3-phosphate + L-glutamine = pyridoxal 5'-phosphate + L-glutamate + phosphate + 3 H2O + H(+). It functions in the pathway cofactor biosynthesis; pyridoxal 5'-phosphate biosynthesis. Functionally, catalyzes the formation of pyridoxal 5'-phosphate from ribose 5-phosphate (RBP), glyceraldehyde 3-phosphate (G3P) and ammonia. The ammonia is provided by the PdxT subunit. Can also use ribulose 5-phosphate and dihydroxyacetone phosphate as substrates, resulting from enzyme-catalyzed isomerization of RBP and G3P, respectively. This is Pyridoxal 5'-phosphate synthase subunit PdxS from Streptococcus pneumoniae (strain P1031).